Reading from the N-terminus, the 206-residue chain is Crossover junction endodeoxyribonuclease RuvC (206 aa).

Active-site residues include Asp7, Glu67, and Asp138. The Mg(2+) site is built by Asp7, Glu67, and Asp138.

It belongs to the RuvC family. Homodimer which binds Holliday junction (HJ) DNA. The HJ becomes 2-fold symmetrical on binding to RuvC with unstacked arms; it has a different conformation from HJ DNA in complex with RuvA. In the full resolvosome a probable DNA-RuvA(4)-RuvB(12)-RuvC(2) complex forms which resolves the HJ. It depends on Mg(2+) as a cofactor.

It localises to the cytoplasm. It catalyses the reaction Endonucleolytic cleavage at a junction such as a reciprocal single-stranded crossover between two homologous DNA duplexes (Holliday junction).. Its function is as follows. The RuvA-RuvB-RuvC complex processes Holliday junction (HJ) DNA during genetic recombination and DNA repair. Endonuclease that resolves HJ intermediates. Cleaves cruciform DNA by making single-stranded nicks across the HJ at symmetrical positions within the homologous arms, yielding a 5'-phosphate and a 3'-hydroxyl group; requires a central core of homology in the junction. The consensus cleavage sequence is 5'-(A/T)TT(C/G)-3'. Cleavage occurs on the 3'-side of the TT dinucleotide at the point of strand exchange. HJ branch migration catalyzed by RuvA-RuvB allows RuvC to scan DNA until it finds its consensus sequence, where it cleaves and resolves the cruciform DNA. The chain is Crossover junction endodeoxyribonuclease RuvC from Anaeromyxobacter sp. (strain Fw109-5).